Reading from the N-terminus, the 381-residue chain is Orotidine 5'-phosphate decarboxylase (381 aa).

Residues Asp42, 64–66 (KTH), 99–108 (DRKFGDIGHT), Tyr333, and Arg352 each bind substrate. The active-site Proton donor is Lys101. The interval 311–333 (LPPEDEDQQTNGSVGGDGQGQQY) is disordered.

The protein belongs to the OMP decarboxylase family.

It carries out the reaction orotidine 5'-phosphate + H(+) = UMP + CO2. It functions in the pathway pyrimidine metabolism; UMP biosynthesis via de novo pathway; UMP from orotate: step 2/2. The chain is Orotidine 5'-phosphate decarboxylase (ura3) from Hypocrea jecorina (Trichoderma reesei).